The following is a 313-amino-acid chain: Small ribosomal subunit biogenesis GTPase RsgA (313 aa).

Positions 82–235 (REKLIAANAT…IIDSPGIQQF (154 aa)) constitute a CP-type G domain. Residues 127 to 130 (NKTD) and 177 to 185 (GQSGMGKST) contribute to the GTP site. 4 residues coordinate Zn(2+): Cys-259, Cys-264, His-266, and Cys-272.

It belongs to the TRAFAC class YlqF/YawG GTPase family. RsgA subfamily. Monomer. Associates with 30S ribosomal subunit, binds 16S rRNA. Zn(2+) serves as cofactor.

It is found in the cytoplasm. Its function is as follows. One of several proteins that assist in the late maturation steps of the functional core of the 30S ribosomal subunit. Helps release RbfA from mature subunits. May play a role in the assembly of ribosomal proteins into the subunit. Circularly permuted GTPase that catalyzes slow GTP hydrolysis, GTPase activity is stimulated by the 30S ribosomal subunit. The sequence is that of Small ribosomal subunit biogenesis GTPase RsgA from Nitrosospira multiformis (strain ATCC 25196 / NCIMB 11849 / C 71).